The chain runs to 145 residues: 3-hydroxyacyl-[acyl-carrier-protein] dehydratase FabZ (145 aa).

H49 is an active-site residue.

It belongs to the thioester dehydratase family. FabZ subfamily.

Its subcellular location is the cytoplasm. It catalyses the reaction a (3R)-hydroxyacyl-[ACP] = a (2E)-enoyl-[ACP] + H2O. Functionally, involved in unsaturated fatty acids biosynthesis. Catalyzes the dehydration of short chain beta-hydroxyacyl-ACPs and long chain saturated and unsaturated beta-hydroxyacyl-ACPs. In Rickettsia conorii (strain ATCC VR-613 / Malish 7), this protein is 3-hydroxyacyl-[acyl-carrier-protein] dehydratase FabZ.